The following is a 416-amino-acid chain: Phosphoglycerate kinase (416 aa).

Substrate is bound by residues 24-26, Arg40, 63-66, Arg122, and Arg162; these read DLN and HLGR. Residues Lys212, Gly300, Glu331, and 360-363 each bind ATP; that span reads GGDS.

The protein belongs to the phosphoglycerate kinase family. In terms of assembly, monomer.

The protein resides in the cytoplasm. The enzyme catalyses (2R)-3-phosphoglycerate + ATP = (2R)-3-phospho-glyceroyl phosphate + ADP. It functions in the pathway carbohydrate degradation; glycolysis; pyruvate from D-glyceraldehyde 3-phosphate: step 2/5. The polypeptide is Phosphoglycerate kinase (Mycobacterium ulcerans (strain Agy99)).